Here is a 399-residue protein sequence, read N- to C-terminus: Serine palmitoyltransferase (399 aa).

Residues 113-114 (GF), His213, Thr241, and Ser243 contribute to the pyridoxal 5'-phosphate site. Lys244 carries the post-translational modification N6-(pyridoxal phosphate)lysine.

This sequence belongs to the class-II pyridoxal-phosphate-dependent aminotransferase family. In terms of assembly, homodimer. It depends on pyridoxal 5'-phosphate as a cofactor.

It is found in the cytoplasm. It carries out the reaction L-serine + hexadecanoyl-CoA + H(+) = 3-oxosphinganine + CO2 + CoA. It participates in lipid metabolism; sphingolipid metabolism. In terms of biological role, catalyzes the condensation of L-serine with palmitoyl-CoA (hexadecanoyl-CoA) to produce 3-oxosphinganine. This is Serine palmitoyltransferase from Sphingobacterium spiritivorum (Flavobacterium spiritivorum).